Consider the following 404-residue polypeptide: S-adenosylmethionine synthase (404 aa).

Residue His-17 coordinates ATP. Asp-19 is a Mg(2+) binding site. Glu-45 contributes to the K(+) binding site. 2 residues coordinate L-methionine: Glu-58 and Gln-101. Positions Gln-101–Gln-111 are flexible loop. ATP contacts are provided by residues Asp-177 to Lys-179, Arg-244 to Phe-245, Asp-253, Arg-259 to Lys-260, Ala-276, and Lys-280. Asp-253 serves as a coordination point for L-methionine. Lys-284 contributes to the L-methionine binding site.

This sequence belongs to the AdoMet synthase family. Homotetramer; dimer of dimers. Mg(2+) is required as a cofactor. It depends on K(+) as a cofactor.

The protein resides in the cytoplasm. The enzyme catalyses L-methionine + ATP + H2O = S-adenosyl-L-methionine + phosphate + diphosphate. The protein operates within amino-acid biosynthesis; S-adenosyl-L-methionine biosynthesis; S-adenosyl-L-methionine from L-methionine: step 1/1. Catalyzes the formation of S-adenosylmethionine (AdoMet) from methionine and ATP. The overall synthetic reaction is composed of two sequential steps, AdoMet formation and the subsequent tripolyphosphate hydrolysis which occurs prior to release of AdoMet from the enzyme. This chain is S-adenosylmethionine synthase, found in Geobacillus thermodenitrificans (strain NG80-2).